The sequence spans 267 residues: Protein TIFY 7 (267 aa).

Residues 113–148 (SSGSSPQLTIFYGGTISVFNDISPDKAQAIMLCAGN) form the Tify domain. The short motif at 220–244 (PQARKASLARFLEKRKERLMSAMPY) is the Jas element. Positions 222 to 229 (ARKASLAR) match the Nuclear localization signal motif.

Belongs to the TIFY/JAZ family. Homo- and heterodimer. Interacts with MYC2, MYC3, MYC4, COI1, AFPH2/NINJA, TIFY10A/JAZ1, TIFY10B/JAZ2, TIFY6B/JAZ3, TIFY5A/JAZ8, TIFY9/JAZ10 and TIFY3A/JAZ11. Interacts with RHD6 and RSL1. Ubiquitinated. Targeted for degradation by the SCF(COI1) E3 ubiquitin ligase-proteasome pathway during jasmonate signaling.

Its subcellular location is the nucleus. In terms of biological role, repressor of jasmonate responses. Jasmonoyl-isoleucine (JA-Ile) specifically promotes COI1-TIFY7/JAZ9 interaction. Interacts with and suppresses RHD6 and RSL1 transcription factor activities to negatively regulate jasmonate-stimulated root hair development. The sequence is that of Protein TIFY 7 (TIFY7) from Arabidopsis thaliana (Mouse-ear cress).